The primary structure comprises 557 residues: Dicarboxylate transporter 1, chloroplastic (557 aa).

Residues 1–69 constitute a chloroplast transit peptide; it reads MASLALSGSC…STLVKASSTV (69 aa). Transmembrane regions (helical) follow at residues 90 to 110, 122 to 142, 158 to 178, 229 to 249, 256 to 276, 305 to 325, 355 to 375, 376 to 396, 411 to 431, 438 to 458, 477 to 497, and 531 to 551; these read AAIK…FVPV, LAIF…LGAV, FAAA…LAFF, AGGI…SNVG, LGSW…SMFL, AAIV…YLIY, IMAA…KLGV, DAVT…VVTW, WFAA…IEWF, FVGG…LLYF, AFLS…LVLA, and YGFL…GAWW.

The protein belongs to the SLC13A/DASS transporter (TC 2.A.47) family. DIT1 subfamily. As to expression, expressed in roots, rosette and cauline leaves, stems, flowers and siliques.

It is found in the plastid. The protein resides in the chloroplast inner membrane. 2-oxoglutarate/malate translocator involved with DIT2-1 in primary ammonia assimilation and in the re-assimilation of ammonia generated by the photorespiratory pathway. Imports 2-oxoglutarate into plastids as precursor for ammonia assimilation. 2-oxoglutarate is converted to glutamate, the end product of ammonia assimilation, which is exported to the cytosol by DIT2-1. The protein is Dicarboxylate transporter 1, chloroplastic (DIT1) of Arabidopsis thaliana (Mouse-ear cress).